The primary structure comprises 446 residues: RUN domain-containing protein 3A (446 aa).

Positions 1–298 are interaction with RAP2A; it reads MEASFVQTTM…LQLQLEEAAA (298 aa). The 138-residue stretch at 52–189 folds into the RUN domain; it reads DDSSEEFVNF…IDFSFCLKGE (138 aa). Thr215 bears the Phosphothreonine mark. A disordered region spans residues 216 to 239; the sequence is DEEERHSAESSTSEDNSPEHPYLP. Phosphoserine is present on Ser232. Positions 267–322 form a coiled coil; it reads YLEELVRLRESQLKDLEAENRRLQLQLEEAAAQNQREKRELEGVILELQEQLTGLI. Residues 372-384 are compositionally biased toward polar residues; that stretch reads PLSAEASLSSDSQ. The segment at 372–403 is disordered; the sequence is PLSAEASLSSDSQRLGEAKRDEEPWGPIGKDP. The span at 385-394 shows a compositional bias: basic and acidic residues; the sequence is RLGEAKRDEE. Residues Ser416 and Ser419 each carry the phosphoserine modification.

Belongs to the RUNDC3 family. In terms of assembly, interacts with the GTP-bound form of RAP2A. As to expression, brain.

Its function is as follows. May act as an effector of RAP2A in neuronal cells. This chain is RUN domain-containing protein 3A (Rundc3a), found in Mus musculus (Mouse).